The chain runs to 56 residues: Small ribosomal subunit protein uS14 (56 aa).

Residues Cys-21, Cys-24, Cys-39, and Cys-42 each coordinate Zn(2+).

It belongs to the universal ribosomal protein uS14 family. Zinc-binding uS14 subfamily. Part of the 30S ribosomal subunit. The cofactor is Zn(2+).

Binds 16S rRNA, required for the assembly of 30S particles. The chain is Small ribosomal subunit protein uS14 from Thermococcus kodakarensis (strain ATCC BAA-918 / JCM 12380 / KOD1) (Pyrococcus kodakaraensis (strain KOD1)).